Consider the following 511-residue polypeptide: 2'-acyl-2-O-sulfo-trehalose (hydroxy)phthioceranyltransferase PapA1 (511 aa).

Belongs to the PapA acyltransferase family.

It carries out the reaction a (hydroxy)phthioceranyl-[(hydroxy)phthioceranic acid synthase] + 2'-palmitoyl/stearoyl-2-O-sulfo-alpha,alpha-trehalose = a 3'-(hydroxy)phthioceranyl-2'-palmitoyl/stearoyl-2-O-sulfo-alpha,alpha-trehalose + holo-[(hydroxy)phthioceranic acid synthase].. Functionally, required for the biosynthesis of sulfolipid-1 (SL-1), a major mycobacterial cell wall lipid. Catalyzes the acylation of trehalose-2-sulfate-2'-palmitate (SL659) by adding the (hydroxy)phthioceranoyl group at the 3'-position to yield the diacylated intermediate 2-palmitoyl-3-(C43)-phthioceranyl-alpha, alpha'-D-trehalose-2'-sulfate (SL1278). In Mycobacterium tuberculosis (strain CDC 1551 / Oshkosh), this protein is 2'-acyl-2-O-sulfo-trehalose (hydroxy)phthioceranyltransferase PapA1 (papA1).